The primary structure comprises 382 residues: MTISYTYDVATESYFGFFKVLFRWKGSVWKLIHRELFMWLVLYYTVLAIYRTLDEERKKIFRSNIEHFINFEPSILTFMLSFFVTTIVQRWNNVFTNMGFIENAAYAVSSFMKNGEDVRRAQRTVIRYLVASQILVMRSISIKALRRFPNYESIVTAGFLTKEESTIIQNTDLSYDSSCVPIRWAIQVLRHQYRSGNFFSHSVYRATWKEVSDFETHLSRVRKVDWVPIPLAYPQVIFFAVRLYFVICAFAKQYFDLDDDDARYVIHYYFPIVTVFQFICLMGWLKVAEALLNPLGEDDDDFEVNFLIDSNIYTGMLIIETSKPPPLKPDLFEDRNFGPIYPNNITDQSVGQALCGSVENIKLAGKDASIEVKKNGENNPPA.

4 helical membrane-spanning segments follow: residues 29–49 (WKLI…VLAI), 68–88 (FINF…TTIV), 231–251 (LAYP…CAFA), and 265–285 (VIHY…MGWL).

The protein belongs to the anion channel-forming bestrophin (TC 1.A.46) family. Calcium-sensitive chloride channel subfamily.

It is found in the membrane. The chain is Bestrophin-6 (best-6) from Caenorhabditis elegans.